The following is a 476-amino-acid chain: Bifunctional protein HldE (476 aa).

The ribokinase stretch occupies residues 1-319 (MKITLPEYDK…ANAVYSQQEI (319 aa)). 196-199 (NLAE) serves as a coordination point for ATP. D265 is a catalytic residue. The tract at residues 345-476 (MTNGCFDILH…EIIKTIRNNS (132 aa)) is cytidylyltransferase.

In the N-terminal section; belongs to the carbohydrate kinase PfkB family. The protein in the C-terminal section; belongs to the cytidylyltransferase family. In terms of assembly, homodimer.

It carries out the reaction D-glycero-beta-D-manno-heptose 7-phosphate + ATP = D-glycero-beta-D-manno-heptose 1,7-bisphosphate + ADP + H(+). The catalysed reaction is D-glycero-beta-D-manno-heptose 1-phosphate + ATP + H(+) = ADP-D-glycero-beta-D-manno-heptose + diphosphate. Its pathway is nucleotide-sugar biosynthesis; ADP-L-glycero-beta-D-manno-heptose biosynthesis; ADP-L-glycero-beta-D-manno-heptose from D-glycero-beta-D-manno-heptose 7-phosphate: step 1/4. It participates in nucleotide-sugar biosynthesis; ADP-L-glycero-beta-D-manno-heptose biosynthesis; ADP-L-glycero-beta-D-manno-heptose from D-glycero-beta-D-manno-heptose 7-phosphate: step 3/4. Catalyzes the phosphorylation of D-glycero-D-manno-heptose 7-phosphate at the C-1 position to selectively form D-glycero-beta-D-manno-heptose-1,7-bisphosphate. In terms of biological role, catalyzes the ADP transfer from ATP to D-glycero-beta-D-manno-heptose 1-phosphate, yielding ADP-D-glycero-beta-D-manno-heptose. This Psychromonas ingrahamii (strain DSM 17664 / CCUG 51855 / 37) protein is Bifunctional protein HldE.